The chain runs to 709 residues: Probable serine/threonine-protein kinase zyg-1 (709 aa).

The Protein kinase domain maps to 13–251 (FQNLQQIGQG…LKEIVMTDYV (239 aa)). ATP-binding positions include 19–27 (IGQGGFGVV) and Lys-41. Asp-130 acts as the Proton acceptor in catalysis. Disordered stretches follow at residues 254 to 329 (KMGE…DRAR) and 591 to 633 (SSSQ…PAAT). 2 stretches are compositionally biased toward basic and acidic residues: residues 262–291 (SREH…ERRP) and 302–313 (SRRDPDGYRAAH). Residues 607-627 (PLSSRTTSSLNVRNGVSSDEN) are compositionally biased toward polar residues.

It belongs to the protein kinase superfamily. Ser/Thr protein kinase family.

It is found in the cytoplasm. The protein localises to the cytoskeleton. The protein resides in the microtubule organizing center. Its subcellular location is the centrosome. It localises to the centriole. It carries out the reaction L-seryl-[protein] + ATP = O-phospho-L-seryl-[protein] + ADP + H(+). It catalyses the reaction L-threonyl-[protein] + ATP = O-phospho-L-threonyl-[protein] + ADP + H(+). Functionally, protein kinase that plays a central role in centrosome duplication. Paternal copy is required to regulate synthesis of daughter centrioles prior to fertilization. Maternal copy regulates centrosome duplication during later cell cycles. Functions upstream of sas-5 and sas-6, and is required for their localization to the centrosome. This chain is Probable serine/threonine-protein kinase zyg-1 (zyg-1), found in Caenorhabditis briggsae.